A 310-amino-acid chain; its full sequence is Protein-methionine-sulfoxide reductase catalytic subunit MsrP (310 aa).

The tat-type signal signal peptide spans 1–45; sequence MRKTSSPRIAPSEITPRDLYHDRRRFMQAAAGAAAAALWPHWLSA. Residues Asn73, 76-77, Cys131, Thr166, Asn214, Arg219, and 230-232 contribute to the Mo-molybdopterin site; these read YE and SAK.

This sequence belongs to the MsrP family. Heterodimer of a catalytic subunit (MsrP) and a heme-binding subunit (MsrQ). Mo-molybdopterin is required as a cofactor. Post-translationally, predicted to be exported by the Tat system. The position of the signal peptide cleavage has not been experimentally proven.

The protein resides in the periplasm. It carries out the reaction L-methionyl-[protein] + a quinone + H2O = L-methionyl-(S)-S-oxide-[protein] + a quinol. The catalysed reaction is L-methionyl-[protein] + a quinone + H2O = L-methionyl-(R)-S-oxide-[protein] + a quinol. In terms of biological role, part of the MsrPQ system that repairs oxidized periplasmic proteins containing methionine sulfoxide residues (Met-O), using respiratory chain electrons. Thus protects these proteins from oxidative-stress damage caused by reactive species of oxygen and chlorine generated by the host defense mechanisms. MsrPQ is essential for the maintenance of envelope integrity under bleach stress, rescuing a wide series of structurally unrelated periplasmic proteins from methionine oxidation. The catalytic subunit MsrP is non-stereospecific, being able to reduce both (R-) and (S-) diastereoisomers of methionine sulfoxide. The sequence is that of Protein-methionine-sulfoxide reductase catalytic subunit MsrP from Methylococcus capsulatus (strain ATCC 33009 / NCIMB 11132 / Bath).